The following is a 108-amino-acid chain: Insertion element IS629 uncharacterized 12 kDa protein S4062 (108 aa).

It belongs to the transposase 8 family.

The polypeptide is Insertion element IS629 uncharacterized 12 kDa protein S4062 (Shigella flexneri).